The chain runs to 250 residues: MSKLRVAVLGAKGRIGSEAVRAVEAAEDMELVAALGRGDGLEALAESGAQVAVELTTPASVMDNLDYCLRHGIHAVVGTTGWTDERLARLNAWLDASPGTGVLIAPNFSIGAVLTMKFAQIAAPYFESVEVVELHHPNKVDAPSGTATRTAQLIAQARQKAGSAPAPDATATALDGARGANVDGVPVHAVRLRGLLAHQEVLLGAEGETLTVRHDSLHHSSFMPGILLGARRVVTTPGLTFGLEHFLDLN.

NAD(+)-binding positions include G10–I15, G78–T80, and A105–F108. The Proton donor/acceptor role is filled by H135. A (S)-2,3,4,5-tetrahydrodipicolinate-binding site is contributed by H136. K139 serves as the catalytic Proton donor. G145–T146 is a binding site for (S)-2,3,4,5-tetrahydrodipicolinate.

The protein belongs to the DapB family.

It is found in the cytoplasm. The enzyme catalyses (S)-2,3,4,5-tetrahydrodipicolinate + NAD(+) + H2O = (2S,4S)-4-hydroxy-2,3,4,5-tetrahydrodipicolinate + NADH + H(+). It carries out the reaction (S)-2,3,4,5-tetrahydrodipicolinate + NADP(+) + H2O = (2S,4S)-4-hydroxy-2,3,4,5-tetrahydrodipicolinate + NADPH + H(+). It participates in amino-acid biosynthesis; L-lysine biosynthesis via DAP pathway; (S)-tetrahydrodipicolinate from L-aspartate: step 4/4. Its function is as follows. Catalyzes the conversion of 4-hydroxy-tetrahydrodipicolinate (HTPA) to tetrahydrodipicolinate. The chain is 4-hydroxy-tetrahydrodipicolinate reductase from Streptomyces coelicolor (strain ATCC BAA-471 / A3(2) / M145).